Here is a 142-residue protein sequence, read N- to C-terminus: Protein E6 (142 aa).

Zinc fingers lie at residues 30–66 and 103–139; these read CVFCRFYLTEQQLAAFYIKNLKLVWKNRYCFACCTPC and CFDCLTLLSFAEKIDCIISGQNFYLVRGRWRSYCRNC.

This sequence belongs to the papillomaviridae E6 protein family. Forms homodimers. Interacts with ubiquitin-protein ligase UBE3A/E6-AP; this interaction stimulates UBE3A ubiquitin activity. Interacts with host BAK1.

Its subcellular location is the host cytoplasm. The protein localises to the host nucleus. Functionally, plays a major role in the induction and maintenance of cellular transformation. E6 associates with host UBE3A/E6-AP ubiquitin-protein ligase and modulates its activity. Protects host keratinocytes from apoptosis by mediating the degradation of host BAK1. May also inhibit host immune response. The polypeptide is Protein E6 (Homo sapiens (Human)).